We begin with the raw amino-acid sequence, 737 residues long: Relaxin receptor 2 (737 aa).

Over 1-399 the chain is Extracellular; that stretch reads MFPLLHFIVL…SSFEDLLANN (399 aa). The LDL-receptor class A domain occupies 27-64; the sequence is LCQKGYFPCGNLTKCLPRAFHCDGVDDCGNGADEDNCG. 3 disulfides stabilise this stretch: Cys28/Cys41, Cys35/Cys54, and Cys48/Cys63. Asn37 carries N-linked (GlcNAc...) asparagine glycosylation. Asn121 carries N-linked (GlcNAc...) asparagine glycosylation. 10 LRR repeats span residues 121–142, 145–166, 169–190, 193–214, 217–238, 241–262, 265–286, 289–310, 313–334, and 337–358; these read NTTL…VFTK, QLKQ…AFFG, NLQI…VFKD, QLTW…LFTG, SLFF…MCAQ, QLNW…SFLS, SLTV…TFSS, NLGE…IFKD, LLQK…QFES, and QLQS…MFQP. Residue Asn257 is glycosylated (N-linked (GlcNAc...) asparagine). An N-linked (GlcNAc...) asparagine glycan is attached at Asn318. Asn361 carries N-linked (GlcNAc...) asparagine glycosylation. Residues 400-420 form a helical membrane-spanning segment; it reads ILRIFVWVIAFITCFGNLFVI. At 421 to 438 the chain is on the cytoplasmic side; that stretch reads GMRSFIKAENTTHATSIK. A helical transmembrane segment spans residues 439 to 459; sequence ILCCADCLMGVYLFFIGFFDI. Residues 460–478 lie on the Extracellular side of the membrane; it reads KYRGQYQKYALLWMESLQC. Cys478 and Cys556 form a disulfide bridge. A helical transmembrane segment spans residues 479-501; sequence RLMGFLAMLSTEVSVLLLTYLTL. The Cytoplasmic portion of the chain corresponds to 502 to 520; the sequence is EKFLAIVFPFSNIRPGKWQ. Residues 521 to 541 form a helical membrane-spanning segment; sequence TMVILICIWIVGFLIAVIPFW. Topologically, residues 542-575 are extracellular; that stretch reads KEDYFGNFYGKNGVCFPLYYDQTEDIGSKGYSLG. The chain crosses the membrane as a helical span at residues 576–596; that stretch reads IFLGVNLLAFLIIVFSYTIMF. At 597 to 622 the chain is on the cytoplasmic side; it reads CSIKKTALQTSEVRNPIGREVAVANR. The helical transmembrane segment at 623–643 threads the bilayer; sequence FFFIVFSDAICWIPVFVIKIL. Over 644-653 the chain is Extracellular; the sequence is SLFRVEIPGT. The helical transmembrane segment at 654–674 threads the bilayer; that stretch reads ITSWIVIFFLPVNSALNPILY. Over 675-737 the chain is Cytoplasmic; sequence TLTTSFFKDK…LGDSIVKPIS (63 aa).

Belongs to the G-protein coupled receptor 1 family.

It is found in the cell membrane. Its function is as follows. Receptor for relaxin. The activity of this receptor is mediated by G proteins leading to stimulation of adenylate cyclase and an increase of cAMP. May also be a receptor for Leydig insulin-like peptide (INSL3). The sequence is that of Relaxin receptor 2 (RXFP2) from Canis lupus familiaris (Dog).